Reading from the N-terminus, the 208-residue chain is MARYTGPVCKLCRREGFKLYLKGERCFTPKCAVVKRPFAPGQHGSATRKLTQYGMQLRSKQALKRMYGVLEKQFRRYFEIASRKSEETGTALIKVLESRLDNVVYRMGFASSRKQARQLVSHGHVLVNGRKVNKASYSVRPGDIIEIKEKSKAKVPVKEAIEASRNRTTPPWLEIDFDAARGTFVRFPEREEVDIPVDLQSIIELYSK.

The 69-residue stretch at 98-166 (SRLDNVVYRM…VKEAIEASRN (69 aa)) folds into the S4 RNA-binding domain.

The protein belongs to the universal ribosomal protein uS4 family. In terms of assembly, part of the 30S ribosomal subunit. Contacts protein S5. The interaction surface between S4 and S5 is involved in control of translational fidelity.

One of the primary rRNA binding proteins, it binds directly to 16S rRNA where it nucleates assembly of the body of the 30S subunit. Its function is as follows. With S5 and S12 plays an important role in translational accuracy. The protein is Small ribosomal subunit protein uS4 of Kosmotoga olearia (strain ATCC BAA-1733 / DSM 21960 / TBF 19.5.1).